A 1435-amino-acid chain; its full sequence is MMQGNKKCTDAFSDSSSIGSVLDDADREVSSLTDRAFRSLCISEDTSFHDSYLAVSPDITRQVFGTFHQRTVGHTQRKSGIWSQLPSQGTEHSGWAATFQQLPKYVQGEEKYPKTSPPPTPVQRRLEVPVSGLRSSNKPVSKVSTLIKSFDRTESQRCESRPTASKPPALKNPPKFAPLPENSVNFCFDSAFLTVRRVPAEVSNTHQNSYQPGRKHGEQESSKNPEMACHGSSSFLPAANDTATLCESKFPSPHHKPVTGEPGRGKGTFLHSENSAFESWNAHQPKLLERKDTAGTVPESKAPKHYGDTTLLREPCPPERTVSPCQVQASCSQEENRLAAGALSTSIPWGCRDPGAQVFAVEGKAPSSQPDSQEKPAQPPWRKPKTGKKGKESLQDTLEEKTQTNQRGPPLYTKHNPQEQFSENNALDLPVEPNEHYDPPFNISKLLTPIIPSKHALDSADSQPAERTPSPPGQLNGYQEKEPSECQSRDSYKSKAPSLLFNLKDVRKRVKSTYSSSPLLKVLDEKTRGKVDGKQEPVSNGVILPNGLEESPPNELSKERPADDPTASHINPQKDPTADPSEPSADSYLTLSTAPTIAKAPFYVNGEAAERSSYENKEVEGELEMGPAGSSWCPDSREHRPRKHLSLRLCNRDPEPGGATEKMKTHQLENGLSRSVSQETEPEREAGLQNTHLNQKFFPGPLSPEEEDVFYSDSQSDFMPSLKGKAKFSTSSSDQSFASFDDQQKMWFTENQREDRRKDVSAGDSQKDEKENVMRKDELQYCALSNGHACLENRSQGEALQRERESVSGGRTRKASAEEANFRGSWIGENKGTTFSQAKDLTPSPSSASNRHMLFTIKDNTLRATPVIKPIMLPLLRTMSLEDSLSSGHKEEELPRPEWGEDPGFCAPENQDILGTSTPTNTRGTRVKCMANEVMEDPGQGSSMARMEASQPAPKGNFPSMPLVGEGDRVKAPPDAAPGLVASNCKSGSADSGKLAAPWHIPTIALPEGDIEDQPPPWQPENCWEEQTPGFKSHFLSTPRAGPPGRRLVPSERANSPNPGSPGESSACSPAASNIWEESSQAPGGPELLPEEPNQASPWASSSPARVTRREDLTHALVWEGGSDPLLELSAEDLRTLSPRGSLLDVATSPAGTSGRLELPAQLERTASKPPAVPPKTEKALRRAKKLASKRRKTDQAQEKHGESQEGKPCPEDLEQTQQRPLCPRERPRHNFPVVRSLPPPVHRHSVSGFSEPVGRRPGGPQSLTPLPAYPATQKVLQDPQSGEYFVFDLPLQVKIKTFYDPETGKYVKVSIPSSEGASPEPPPPDALAAPYVLYPGFQPVPVTALMPLRCSSQLSAPTFLRQGPRASAARARTQSVHESGLQLDPGPHGDCTPHSAGQRPHGPPQSPGEEGVEAPGLGIISTDDLEDFATEGIS.

Disordered regions lie at residues 109-176, 203-234, 250-270, and 291-311; these read EEKY…PPKF, SNTH…GSSS, FPSP…GTFL, and KDTA…DTTL. Threonine 120 bears the Phosphothreonine mark. Residues 133–147 are compositionally biased toward polar residues; that stretch reads LRSSNKPVSKVSTLI. A compositionally biased stretch (basic and acidic residues) spans 149–160; it reads SFDRTESQRCES. Serine 323 carries the phosphoserine modification. Disordered regions lie at residues 362–592, 609–772, 795–847, 1007–1108, 1138–1261, and 1363–1435; these read EGKA…LTLS, AERS…EKEN, SQGE…SPSS, PEGD…ARVT, SPRG…PGGP, and QGPR…EGIS. Basic and acidic residues predominate over residues 389–402; the sequence is KGKESLQDTLEEKT. Position 470 is a phosphoserine (serine 470). Basic and acidic residues-rich tracts occupy residues 479–493, 522–535, 609–620, and 650–667; these read QEKE…DSYK, VLDE…DGKQ, AERSSYENKEVE, and CNRD…KTHQ. Residues 668-679 are compositionally biased toward polar residues; sequence LENGLSRSVSQE. The span at 727–741 shows a compositional bias: low complexity; that stretch reads KFSTSSSDQSFASFD. The span at 751 to 772 shows a compositional bias: basic and acidic residues; that stretch reads NQREDRRKDVSAGDSQKDEKEN. The residue at position 816 (serine 816) is a Phosphoserine. Residues 831 to 847 are compositionally biased toward polar residues; the sequence is KGTTFSQAKDLTPSPSS. The segment covering 1055–1066 has biased composition (low complexity); sequence NSPNPGSPGESS. The segment covering 1067–1082 has biased composition (polar residues); the sequence is ACSPAASNIWEESSQA. Residues 1083 to 1093 are compositionally biased toward low complexity; sequence PGGPELLPEEP. A compositionally biased stretch (polar residues) spans 1094–1105; sequence NQASPWASSSPA. Basic residues predominate over residues 1182–1193; sequence RRAKKLASKRRK. Over residues 1194 to 1211 the composition is skewed to basic and acidic residues; it reads TDQAQEKHGESQEGKPCP. Residues 1424–1435 are compositionally biased toward acidic residues; sequence DDLEDFATEGIS.

Interacts with FHL2. Expressed in the heart and skeletal muscle.

It localises to the cytoplasm. The protein resides in the myofibril. The protein localises to the sarcomere. Its subcellular location is the z line. Plays an important role in cardiomyocyte hypertrophy via activation of the calcineurin/NFAT signaling pathway. The sequence is that of Cardiac-enriched FHL2-interacting protein from Homo sapiens (Human).